We begin with the raw amino-acid sequence, 297 residues long: 4-hydroxy-tetrahydrodipicolinate synthase (297 aa).

Thr-47 is a binding site for pyruvate. Catalysis depends on Tyr-135, which acts as the Proton donor/acceptor. The active-site Schiff-base intermediate with substrate is the Lys-163. Ile-205 is a binding site for pyruvate.

It belongs to the DapA family. Homotetramer; dimer of dimers.

It is found in the cytoplasm. It carries out the reaction L-aspartate 4-semialdehyde + pyruvate = (2S,4S)-4-hydroxy-2,3,4,5-tetrahydrodipicolinate + H2O + H(+). It participates in amino-acid biosynthesis; L-lysine biosynthesis via DAP pathway; (S)-tetrahydrodipicolinate from L-aspartate: step 3/4. Catalyzes the condensation of (S)-aspartate-beta-semialdehyde [(S)-ASA] and pyruvate to 4-hydroxy-tetrahydrodipicolinate (HTPA). This Dehalococcoides mccartyi (strain CBDB1) protein is 4-hydroxy-tetrahydrodipicolinate synthase.